Reading from the N-terminus, the 601-residue chain is Glutathione-regulated potassium-efflux system protein KefB (601 aa).

The next 13 membrane-spanning stretches (helical) occupy residues 4–24, 29–49, 55–75, 87–107, 115–135, 152–172, 177–197, 207–227, 230–250, 268–288, 291–311, 324–344, and 356–376; these read SDFL…VPLA, IGAV…GLGF, EILH…GLEL, IFGV…GLLM, AAVV…LQLM, VLLF…LLAG, HFDW…LIGG, FIAA…LVLG, LFMD…GVLL, GLLL…GVLY, LLWV…VLYL, MQFA…FSTA, and ALLL…MKLV. The RCK N-terminal domain maps to 400–519; that stretch reads KPQVIVVGFG…AGVTQFSRET (120 aa).

It belongs to the monovalent cation:proton antiporter 2 (CPA2) transporter (TC 2.A.37) family. KefB subfamily. As to quaternary structure, interacts with the regulatory subunit KefG.

The protein resides in the cell inner membrane. Its function is as follows. Pore-forming subunit of a potassium efflux system that confers protection against electrophiles. Catalyzes K(+)/H(+) antiport. In Escherichia coli (strain SMS-3-5 / SECEC), this protein is Glutathione-regulated potassium-efflux system protein KefB.